Reading from the N-terminus, the 429-residue chain is uncharacterized protein (429 aa).

The span at 1 to 12 shows a compositional bias: basic and acidic residues; sequence MSDSKEDIRNGQ. Disordered regions lie at residues 1–63, 257–306, and 320–429; these read MSDS…APEA, RSRA…SDRM, and YRGY…SDSE. Positions 328 to 362 are enriched in acidic residues; the sequence is EENEEDDLGDFIAEEEEEEEQEEEQEEDEEDEEEV. The segment covering 369–378 has biased composition (basic and acidic residues); that stretch reads KGFDADKEAS.

Belongs to the LEO1 family.

The protein resides in the nucleus. This is an uncharacterized protein from Schizosaccharomyces pombe (strain 972 / ATCC 24843) (Fission yeast).